A 446-amino-acid chain; its full sequence is Phosphoglucosamine mutase (446 aa).

Catalysis depends on Ser-102, which acts as the Phosphoserine intermediate. 4 residues coordinate Mg(2+): Ser-102, Asp-239, Asp-241, and Asp-243. At Ser-102 the chain carries Phosphoserine.

It belongs to the phosphohexose mutase family. Requires Mg(2+) as cofactor. Post-translationally, activated by phosphorylation.

It catalyses the reaction alpha-D-glucosamine 1-phosphate = D-glucosamine 6-phosphate. Catalyzes the conversion of glucosamine-6-phosphate to glucosamine-1-phosphate. This is Phosphoglucosamine mutase from Solibacter usitatus (strain Ellin6076).